We begin with the raw amino-acid sequence, 1438 residues long: DNA polymerase III PolC-type (1438 aa).

In terms of domain architecture, Exonuclease spans 422 to 578; sequence YVVFDVETTG…YDTEATAYIF (157 aa).

It belongs to the DNA polymerase type-C family. PolC subfamily.

Its subcellular location is the cytoplasm. It catalyses the reaction DNA(n) + a 2'-deoxyribonucleoside 5'-triphosphate = DNA(n+1) + diphosphate. Its function is as follows. Required for replicative DNA synthesis. This DNA polymerase also exhibits 3' to 5' exonuclease activity. This is DNA polymerase III PolC-type from Staphylococcus aureus (strain MSSA476).